The primary structure comprises 141 residues: Putative pre-16S rRNA nuclease (141 aa).

This sequence belongs to the YqgF nuclease family.

Its subcellular location is the cytoplasm. Could be a nuclease involved in processing of the 5'-end of pre-16S rRNA. This Cupriavidus necator (strain ATCC 17699 / DSM 428 / KCTC 22496 / NCIMB 10442 / H16 / Stanier 337) (Ralstonia eutropha) protein is Putative pre-16S rRNA nuclease.